Here is a 186-residue protein sequence, read N- to C-terminus: Trafficking protein particle complex subunit 5 (186 aa).

Belongs to the TRAPP small subunits family. BET3 subfamily. As to quaternary structure, part of the multisubunit TRAPP (transport protein particle) complex.

It is found in the golgi apparatus. It localises to the cis-Golgi network. The protein resides in the endoplasmic reticulum. In terms of biological role, may play a role in vesicular transport from endoplasmic reticulum to Golgi. The protein is Trafficking protein particle complex subunit 5 (trappc5) of Dictyostelium discoideum (Social amoeba).